A 534-amino-acid chain; its full sequence is 2,3-bisphosphoglycerate-independent phosphoglycerate mutase (534 aa).

Positions 15 and 65 each coordinate Mn(2+). The active-site Phosphoserine intermediate is serine 65. Substrate-binding positions include histidine 126, 156–157, arginine 188, arginine 194, 261–264, and lysine 334; these read RD and RPDR. Aspartate 401, histidine 405, aspartate 442, histidine 443, and histidine 460 together coordinate Mn(2+).

The protein belongs to the BPG-independent phosphoglycerate mutase family. Mn(2+) serves as cofactor.

It localises to the plastid. The protein localises to the chloroplast. It carries out the reaction (2R)-2-phosphoglycerate = (2R)-3-phosphoglycerate. It functions in the pathway carbohydrate degradation; glycolysis; pyruvate from D-glyceraldehyde 3-phosphate: step 3/5. Functionally, catalyzes the interconversion of 2-phosphoglycerate and 3-phosphoglycerate. The sequence is that of 2,3-bisphosphoglycerate-independent phosphoglycerate mutase from Pyropia yezoensis (Susabi-nori).